Here is a 245-residue protein sequence, read N- to C-terminus: NADH-quinone oxidoreductase subunit C (245 aa).

A compositionally biased stretch (basic and acidic residues) spans M1–D10. 2 disordered regions span residues M1–G54 and Q217–Q245. Positions G11 to A28 are enriched in low complexity. Residues G39–G54 show a composition bias toward gly residues.

Belongs to the complex I 30 kDa subunit family. As to quaternary structure, NDH-1 is composed of 14 different subunits. Subunits NuoB, C, D, E, F, and G constitute the peripheral sector of the complex.

Its subcellular location is the cell membrane. It catalyses the reaction a quinone + NADH + 5 H(+)(in) = a quinol + NAD(+) + 4 H(+)(out). Its function is as follows. NDH-1 shuttles electrons from NADH, via FMN and iron-sulfur (Fe-S) centers, to quinones in the respiratory chain. The immediate electron acceptor for the enzyme in this species is believed to be a menaquinone. Couples the redox reaction to proton translocation (for every two electrons transferred, four hydrogen ions are translocated across the cytoplasmic membrane), and thus conserves the redox energy in a proton gradient. This is NADH-quinone oxidoreductase subunit C from Salinispora arenicola (strain CNS-205).